The following is a 430-amino-acid chain: Enolase (430 aa).

A (2R)-2-phosphoglycerate-binding site is contributed by Gln-164. Glu-208 (proton donor) is an active-site residue. 3 residues coordinate Mg(2+): Asp-245, Glu-288, and Asp-315. Positions 340, 369, 370, and 391 each coordinate (2R)-2-phosphoglycerate. Residue Lys-340 is the Proton acceptor of the active site.

It belongs to the enolase family. The cofactor is Mg(2+).

The protein localises to the cytoplasm. Its subcellular location is the secreted. It localises to the cell surface. It carries out the reaction (2R)-2-phosphoglycerate = phosphoenolpyruvate + H2O. It participates in carbohydrate degradation; glycolysis; pyruvate from D-glyceraldehyde 3-phosphate: step 4/5. Catalyzes the reversible conversion of 2-phosphoglycerate (2-PG) into phosphoenolpyruvate (PEP). It is essential for the degradation of carbohydrates via glycolysis. The protein is Enolase of Thermococcus gammatolerans (strain DSM 15229 / JCM 11827 / EJ3).